Reading from the N-terminus, the 337-residue chain is Phenylalanine--tRNA ligase alpha subunit (337 aa).

Glu-252 contributes to the Mg(2+) binding site.

The protein belongs to the class-II aminoacyl-tRNA synthetase family. Phe-tRNA synthetase alpha subunit type 1 subfamily. As to quaternary structure, tetramer of two alpha and two beta subunits. Mg(2+) is required as a cofactor.

It localises to the cytoplasm. It carries out the reaction tRNA(Phe) + L-phenylalanine + ATP = L-phenylalanyl-tRNA(Phe) + AMP + diphosphate + H(+). The sequence is that of Phenylalanine--tRNA ligase alpha subunit from Francisella tularensis subsp. tularensis (strain SCHU S4 / Schu 4).